Consider the following 399-residue polypeptide: All trans-polyprenyl-diphosphate synthase PDSS2 (399 aa).

It belongs to the FPP/GGPP synthase family. Heterotetramer composed of 2 PDSS1/DPS1 and 2 PDSS2/DLP1 subunits.

It localises to the mitochondrion. It carries out the reaction 7 isopentenyl diphosphate + (2E,6E)-farnesyl diphosphate = all-trans-decaprenyl diphosphate + 7 diphosphate. It catalyses the reaction 6 isopentenyl diphosphate + (2E,6E)-farnesyl diphosphate = all-trans-nonaprenyl diphosphate + 6 diphosphate. Its pathway is cofactor biosynthesis; ubiquinone biosynthesis. Its function is as follows. Heterotetrameric enzyme that catalyzes the condensation of farnesyl diphosphate (FPP), which acts as a primer, and isopentenyl diphosphate (IPP) to produce prenyl diphosphates of varying chain lengths and participates in the determination of the side chain of ubiquinone. Supplies nona and decaprenyl diphosphate, the precursors for the side chain of the isoprenoid quinones ubiquinone-9 (Q9) and ubiquinone-10 (Q10) respectively. The enzyme adds isopentenyl diphosphate molecules sequentially to farnesyl diphosphate with trans stereochemistry. May play a role during cerebellar development. May regulate mitochondrial respiratory chain function. The chain is All trans-polyprenyl-diphosphate synthase PDSS2 from Homo sapiens (Human).